Here is a 278-residue protein sequence, read N- to C-terminus: Large ribosomal subunit protein uL2 (278 aa).

Disordered stretches follow at residues 1–20 and 225–278; these read MGIR…SVSD and VMNP…GKKR. A compositionally biased stretch (basic residues) spans 258-278; the sequence is RNKKKASSRLIVRRRKSGKKR.

Belongs to the universal ribosomal protein uL2 family. Part of the 50S ribosomal subunit. Forms a bridge to the 30S subunit in the 70S ribosome.

Functionally, one of the primary rRNA binding proteins. Required for association of the 30S and 50S subunits to form the 70S ribosome, for tRNA binding and peptide bond formation. It has been suggested to have peptidyltransferase activity; this is somewhat controversial. Makes several contacts with the 16S rRNA in the 70S ribosome. The chain is Large ribosomal subunit protein uL2 from Cutibacterium acnes (strain DSM 16379 / KPA171202) (Propionibacterium acnes).